A 461-amino-acid polypeptide reads, in one-letter code: Fumarate hydratase class II (461 aa).

Substrate is bound by residues 99–101 (SGT), arginine 127, 130–133 (HPND), 140–142 (SSN), and threonine 188. The Proton donor/acceptor role is filled by histidine 189. Serine 319 is an active-site residue. Residues serine 320 and 325–327 (KVN) contribute to the substrate site.

Belongs to the class-II fumarase/aspartase family. Fumarase subfamily. As to quaternary structure, homotetramer.

It is found in the cytoplasm. The catalysed reaction is (S)-malate = fumarate + H2O. It participates in carbohydrate metabolism; tricarboxylic acid cycle; (S)-malate from fumarate: step 1/1. Its function is as follows. Involved in the TCA cycle. Catalyzes the stereospecific interconversion of fumarate to L-malate. The protein is Fumarate hydratase class II of Chromobacterium violaceum (strain ATCC 12472 / DSM 30191 / JCM 1249 / CCUG 213 / NBRC 12614 / NCIMB 9131 / NCTC 9757 / MK).